A 366-amino-acid chain; its full sequence is Protein FAM110B (366 aa).

Disordered regions lie at residues 127–152 (SSEG…DTTD), 163–182 (KVYP…HVSR), and 216–252 (CSSS…RPSL). A phosphoserine mark is found at Ser234 and Ser297. The tract at residues 313–333 (DCEQSQDSNSDLRNDDSANDR) is disordered. The segment covering 322 to 331 (SDLRNDDSAN) has biased composition (basic and acidic residues).

It belongs to the FAM110 family.

It localises to the cytoplasm. The protein resides in the cytoskeleton. The protein localises to the microtubule organizing center. It is found in the centrosome. The sequence is that of Protein FAM110B (Fam110b) from Mus musculus (Mouse).